The chain runs to 92 residues: Small ribosomal subunit protein uS19c (92 aa).

The protein belongs to the universal ribosomal protein uS19 family.

Its subcellular location is the plastid. It localises to the chloroplast. Its function is as follows. Protein S19 forms a complex with S13 that binds strongly to the 16S ribosomal RNA. The protein is Small ribosomal subunit protein uS19c of Eucalyptus globulus subsp. globulus (Tasmanian blue gum).